The chain runs to 484 residues: Ribosome biogenesis protein YTM1 (484 aa).

A ubiquitin-like (UBL) domain region spans residues 11–94 (VKVLFTTTEQ…EKTVTLQYVR (84 aa)). 7 WD repeats span residues 121-160 (SSAGKWSGSSFLQGQDRILSASYDGLLRIWNGSGQALATS), 166-204 (GPLCGLKSAKFMSSTKIAAAGLDRTVRIWDYTEADDHFS), 215-254 (GHRSIIESLGVDGSSRRILTACADGSIGLWTTSKKLAPEA), 289-329 (VHSR…VVST), 331-372 (TTSN…AATS), 378-418 (GHIN…PAAG), and 448-484 (GEGVKVFDVQWDKTWGIVSGGEDKKVQINKGRNIISS).

The protein belongs to the WD repeat WDR12/YTM1 family. In terms of assembly, component of the NOP7 complex, composed of ERB1, NOP7 and YTM1. The complex is held together by ERB1, which interacts with NOP7 via its N-terminal domain and with YTM1 via a high-affinity interaction between the seven-bladed beta-propeller domains of the 2 proteins. The NOP7 complex associates with the 66S pre-ribosome. Interacts (via UBL domain) with MDN1 (via VWFA/MIDAS domain).

It is found in the nucleus. The protein resides in the nucleolus. It localises to the nucleoplasm. Component of the NOP7 complex, which is required for maturation of the 25S and 5.8S ribosomal RNAs and formation of the 60S ribosome. The polypeptide is Ribosome biogenesis protein YTM1 (Pyricularia oryzae (strain 70-15 / ATCC MYA-4617 / FGSC 8958) (Rice blast fungus)).